We begin with the raw amino-acid sequence, 1129 residues long: Phospholipid-transporting ATPase 11C (1129 aa).

The Cytoplasmic segment spans residues M1 to D83. The chain crosses the membrane as a helical span at residues T84–I104. The Extracellular portion of the chain corresponds to K105–S287. The helical transmembrane segment at I288–T308 threads the bilayer. The Cytoplasmic segment spans residues L309–D343. A helical membrane pass occupies residues F344–E364. Residues M365 to Y876 are Extracellular-facing. Catalysis depends on D409, which acts as the 4-aspartylphosphate intermediate. Positions 409, 410, and 411 each coordinate ATP. D409 serves as a coordination point for Mg(2+). Position 411 (T411) interacts with Mg(2+). S442 is modified (phosphoserine). 4 residues coordinate ATP: E498, F540, K563, and R594. A coiled-coil region spans residues D607–I643. 3 residues coordinate ATP: T674, G675, and D676. Residues T695–L726 adopt a coiled-coil conformation. 2 residues coordinate ATP: R789 and K795. Position 816 (D816) interacts with Mg(2+). ATP contacts are provided by N819 and D820. D820 provides a ligand contact to Mg(2+). The helical transmembrane segment at F877–F897 threads the bilayer. The Cytoplasmic portion of the chain corresponds to S898 to A905. The helical transmembrane segment at A906–L926 threads the bilayer. Topologically, residues E927–Q952 are extracellular. A helical transmembrane segment spans residues L953 to G973. Residues T974–K988 lie on the Cytoplasmic side of the membrane. Residues I989–L1009 traverse the membrane as a helical segment. The Extracellular portion of the chain corresponds to K1010–H1023. The helical transmembrane segment at F1024–I1044 threads the bilayer. Residues W1045–T1066 are Cytoplasmic-facing. A helical membrane pass occupies residues W1067–V1087. Topologically, residues K1088–L1129 are extracellular. Phosphoserine occurs at positions 1105, 1113, and 1123. The Di-leucine motif motif lies at S1113–L1118.

Belongs to the cation transport ATPase (P-type) (TC 3.A.3) family. Type IV subfamily. As to quaternary structure, component of a P4-ATPase flippase complex which consists of a catalytic alpha subunit ATP11C and an accessory beta subunit TMEM30A. The cofactor is Mg(2+). Post-translationally, proteolytically cleaved by CASP3, CASP6 and CASP7. In terms of processing, phosphorylated at Ser-1113 likely by PRKCA; this creates a functional di-leucine motif that is sufficient for endocytosis. In terms of tissue distribution, widely expressed. Expressed in retina, brain, liver and testes (at protein level). Expressed in lung, bone marrow, lymph nodes, prostate, ovary and uterus. Expressed in fetus.

The protein resides in the cell membrane. It is found in the endoplasmic reticulum membrane. The protein localises to the early endosome membrane. It localises to the recycling endosome membrane. It catalyses the reaction ATP + H2O + phospholipidSide 1 = ADP + phosphate + phospholipidSide 2.. The catalysed reaction is a 1,2-diacyl-sn-glycero-3-phospho-L-serine(out) + ATP + H2O = a 1,2-diacyl-sn-glycero-3-phospho-L-serine(in) + ADP + phosphate + H(+). It carries out the reaction a 1,2-diacyl-sn-glycero-3-phosphoethanolamine(out) + ATP + H2O = a 1,2-diacyl-sn-glycero-3-phosphoethanolamine(in) + ADP + phosphate + H(+). Catalytic component of a P4-ATPase flippase complex which catalyzes the hydrolysis of ATP coupled to the transport of aminophospholipids, phosphatidylserines (PS) and phosphatidylethanolamines (PE), from the outer to the inner leaflet of the plasma membrane. Major PS-flippase in immune cell subsets. In erythrocyte plasma membrane, it is required to maintain PS in the inner leaflet preventing its exposure on the surface. This asymmetric distribution is critical for the survival of erythrocytes in circulation since externalized PS is a phagocytic signal for erythrocyte clearance by splenic macrophages. Required for B cell differentiation past the pro-B cell stage. Seems to mediate PS flipping in pro-B cells. May be involved in the transport of cholestatic bile acids. The chain is Phospholipid-transporting ATPase 11C from Mus musculus (Mouse).